We begin with the raw amino-acid sequence, 510 residues long: MDIRAAEISAILKDQIKNFGQDAEVSEVGQVLSVGDGIARVYGLDNVQAGEMVEFENGTRGMALNLESDNVGIVIFGADREIKEGQTVKRTRAIVDTPVGKGLLGRVVDALGNPIDGKGPIQSDERKRVDVKAPGIIPRKSVHEPMATGLKAIDALIPIGRGQRELIIGDRQTGKTAVALDTILNQKPLNVAGAPESQKLYCVYVAVGQKRSTVAQFVKVLEEQGALEYSIVVAATASDPAPMQYLAPFTGCTMGEYFRDNGMHAVIIYDDLSKQAVAYRQMSLLLRRPPGREAYPGDVFYLHSRLLERSAKLNDSLGAGSLTALPVIETQANDVSAYIPTNVISITDGQIFLETDLFFQGIRPAVNVGLSVSRVGSSAQTKAMKKVAGKIKGELAQYREMAAFAQFGSDLDASTQRLLNRGARLTELLKQPQFSPLKMEEQVVVIWAGTNGYLDALPLNKVRAFEDGLLSLLRGKHVDILNAIRDSRDLSDDNAAKLKSVVDGFVKTFA.

169–176 (GDRQTGKT) contacts ATP.

The protein belongs to the ATPase alpha/beta chains family. As to quaternary structure, F-type ATPases have 2 components, CF(1) - the catalytic core - and CF(0) - the membrane proton channel. CF(1) has five subunits: alpha(3), beta(3), gamma(1), delta(1), epsilon(1). CF(0) has three main subunits: a(1), b(2) and c(9-12). The alpha and beta chains form an alternating ring which encloses part of the gamma chain. CF(1) is attached to CF(0) by a central stalk formed by the gamma and epsilon chains, while a peripheral stalk is formed by the delta and b chains.

It is found in the cell inner membrane. It carries out the reaction ATP + H2O + 4 H(+)(in) = ADP + phosphate + 5 H(+)(out). Produces ATP from ADP in the presence of a proton gradient across the membrane. The alpha chain is a regulatory subunit. The chain is ATP synthase subunit alpha from Afipia carboxidovorans (strain ATCC 49405 / DSM 1227 / KCTC 32145 / OM5) (Oligotropha carboxidovorans).